Consider the following 164-residue polypeptide: MKCKPNQTRTYDPEGFKKRAACLCFRSEREDEVLLVSSSRYPDRWIVPGGGMEPEEEPGGAAVREVYEEAGVKGKLGRLLGVFEQNQDPKHRTYVYVLTVTELLEDWEDSVSIGRKREWFKVEDAIKVLQCHKPVHAEYLEKLKLGGSPTNGNSMAPSSPDSDP.

Substrate contacts are provided by residues Arg9, 17–19 (KKR), and 38–40 (SSR). Residues 17 to 144 (KKRAACLCFR…VHAEYLEKLK (128 aa)) enclose the Nudix hydrolase domain. Residues Gly49 and Glu65 each contribute to the Mg(2+) site. Positions 50-71 (GGMEPEEEPGGAAVREVYEEAG) match the Nudix box motif. The active-site Proton acceptor is the Glu68. Mg(2+) is bound at residue Glu69. Substrate-binding positions include 89-91 (PKH), Arg115, and Lys133. The tract at residues 144-164 (KLGGSPTNGNSMAPSSPDSDP) is disordered. Residues 148 to 164 (SPTNGNSMAPSSPDSDP) show a composition bias toward polar residues.

The protein belongs to the Nudix hydrolase family. DIPP subfamily. It depends on Mg(2+) as a cofactor. Requires Mn(2+) as cofactor. Mainly expressed in testis and, at lower level in brain. According to PubMed:12121577, it is widely expressed.

The protein localises to the cytoplasm. The enzyme catalyses diphospho-myo-inositol polyphosphate + H2O = myo-inositol polyphosphate + phosphate.. It catalyses the reaction P(1),P(6)-bis(5'-adenosyl) hexaphosphate + H2O = adenosine 5'-pentaphosphate + AMP + 2 H(+). It carries out the reaction P(1),P(5)-bis(5'-adenosyl) pentaphosphate + H2O = adenosine 5'-tetraphosphate + AMP + 2 H(+). Its function is as follows. Cleaves a beta-phosphate from the diphosphate groups in PP-InsP5 (diphosphoinositol pentakisphosphate), suggesting that it may play a role in signal transduction. Also able to catalyze the hydrolysis of dinucleoside oligophosphates, with Ap6A and Ap5A being the preferred substrates. The major reaction products are ADP and p4a from Ap6A and ADP and ATP from Ap5A. Also able to hydrolyze 5-phosphoribose 1-diphosphate. This is Diphosphoinositol polyphosphate phosphohydrolase 3-alpha (NUDT10) from Homo sapiens (Human).